Consider the following 73-residue polypeptide: Defensin-like protein 87 (73 aa).

Positions 1–27 (MTTKKTSSVVLPLLLVFALILMPMVAG) are cleaved as a signal peptide. 3 disulfide bridges follow: Cys-33–Cys-71, Cys-45–Cys-69, and Cys-49–Cys-70.

Belongs to the DEFL family.

The protein localises to the secreted. The sequence is that of Defensin-like protein 87 from Arabidopsis thaliana (Mouse-ear cress).